A 153-amino-acid polypeptide reads, in one-letter code: Small ribosomal subunit protein uS19 (153 aa).

Belongs to the universal ribosomal protein uS19 family.

This chain is Small ribosomal subunit protein uS19 (RPS15), found in Elaeis oleifera (American oil palm).